The sequence spans 388 residues: Peptide chain release factor subunit 1 (388 aa).

Belongs to the eukaryotic release factor 1 family. Heterodimer of two subunits, one of which binds GTP.

The protein resides in the cytoplasm. Directs the termination of nascent peptide synthesis (translation) in response to the termination codons UAA, UAG and UGA. This Pyrobaculum aerophilum (strain ATCC 51768 / DSM 7523 / JCM 9630 / CIP 104966 / NBRC 100827 / IM2) protein is Peptide chain release factor subunit 1 (prf1).